A 216-amino-acid polypeptide reads, in one-letter code: Uracil phosphoribosyltransferase (216 aa).

5-phospho-alpha-D-ribose 1-diphosphate-binding positions include Arg85, Arg110, and 135–143 (DPMVATGYS). Uracil-binding positions include Ile200 and 205 to 207 (GDA). Asp206 contributes to the 5-phospho-alpha-D-ribose 1-diphosphate binding site.

This sequence belongs to the UPRTase family. Mg(2+) is required as a cofactor.

The enzyme catalyses UMP + diphosphate = 5-phospho-alpha-D-ribose 1-diphosphate + uracil. It participates in pyrimidine metabolism; UMP biosynthesis via salvage pathway; UMP from uracil: step 1/1. With respect to regulation, allosterically activated by GTP. Catalyzes the conversion of uracil and 5-phospho-alpha-D-ribose 1-diphosphate (PRPP) to UMP and diphosphate. This chain is Uracil phosphoribosyltransferase, found in Burkholderia vietnamiensis (strain G4 / LMG 22486) (Burkholderia cepacia (strain R1808)).